Consider the following 273-residue polypeptide: Serine acetyltransferase (273 aa).

This sequence belongs to the transferase hexapeptide repeat family. As to quaternary structure, homohexamer. Dimer of a homotrimer.

The protein resides in the cytoplasm. It carries out the reaction L-serine + acetyl-CoA = O-acetyl-L-serine + CoA. It functions in the pathway amino-acid biosynthesis; L-cysteine biosynthesis; L-cysteine from L-serine: step 1/2. The polypeptide is Serine acetyltransferase (cysE) (Shigella flexneri).